The sequence spans 130 residues: MAMKIRLARGGSKKRPFYRIVASDSRMPRDGRFIEKLGTYNPLLPKDSEDRVKMDMERVQHWLDQGAQPTDRISRFLEAAGHTPKKERANMKKAQPGKKAVERAEEKAAKASAAAEAPAEAPAAEAAAEE.

The segment at 80–130 (AGHTPKKERANMKKAQPGKKAVERAEEKAAKASAAAEAPAEAPAAEAAAEE) is disordered. Over residues 99 to 109 (KAVERAEEKAA) the composition is skewed to basic and acidic residues. Positions 110-130 (KASAAAEAPAEAPAAEAAAEE) are enriched in low complexity.

The protein belongs to the bacterial ribosomal protein bS16 family.

In Jannaschia sp. (strain CCS1), this protein is Small ribosomal subunit protein bS16.